Here is a 469-residue protein sequence, read N- to C-terminus: Relaxin-3 receptor 1 (469 aa).

The Extracellular portion of the chain corresponds to 1–81 (MQMADAATIA…ESADTEARVR (81 aa)). Asn-36 and Asn-40 each carry an N-linked (GlcNAc...) asparagine glycan. A helical transmembrane segment spans residues 82 to 102 (ILISVVYWVVCALGLAGNLLV). Residues 103–119 (LYLMKSMQGWRKSSINL) lie on the Cytoplasmic side of the membrane. A helical transmembrane segment spans residues 120-140 (FVTNLALTDFQFVLTLPFWAV). The Extracellular portion of the chain corresponds to 141-156 (ENALDFKWPFGKAMCK). Cys-155 and Cys-247 are disulfide-bonded. The chain crosses the membrane as a helical span at residues 157-177 (IVSMVTSMNMYASVFFLTAMS). The Cytoplasmic segment spans residues 178–215 (VTRYHSVASALKSHRTRGHGRGDCCGRSLGDSCCFSAK). Residues 216-236 (ALCVWIWALAALASLPSAIFS) form a helical membrane-spanning segment. At 237–270 (TTVKVMGEELCLVRFPDKLLGRDRQFWLGLYHSQ) the chain is on the extracellular side. A helical transmembrane segment spans residues 271 to 291 (KVLLGFVLPLGIIILCYLLLV). Residues 292-329 (RFIADRRAAGTKGGAAVAGGRPTGASARRLSKVTKSVT) lie on the Cytoplasmic side of the membrane. The helical transmembrane segment at 330 to 350 (IVVLSFFLCWLPNQALTTWSI) threads the bilayer. Over 351–356 (LIKFNA) the chain is Extracellular. A helical membrane pass occupies residues 357–377 (VPFSQEYFLCQVYAFPVSVCL). Residues 378-469 (AHSNSCLNPV…YDLLPSSSAY (92 aa)) are Cytoplasmic-facing.

It belongs to the G-protein coupled receptor 1 family. Expressed predominantly in brain regions. Highest expression in substantia nigra and pituitary, followed by hippocampus, spinal cord, amygdala, caudate nucleus and corpus callosum, quite low level in cerebellum. In peripheral tissues, relatively high levels in adrenal glands, low levels in pancreas, salivary gland, placenta, mammary gland and testis.

The protein resides in the cell membrane. Receptor for RNL3/relaxin-3. Binding of the ligand inhibit cAMP accumulation. This chain is Relaxin-3 receptor 1 (RXFP3), found in Homo sapiens (Human).